The following is a 444-amino-acid chain: UDP-N-acetylmuramoylalanine--D-glutamate ligase (444 aa).

Position 113–119 (113–119 (GSNGKST)) interacts with ATP.

It belongs to the MurCDEF family.

The protein resides in the cytoplasm. The enzyme catalyses UDP-N-acetyl-alpha-D-muramoyl-L-alanine + D-glutamate + ATP = UDP-N-acetyl-alpha-D-muramoyl-L-alanyl-D-glutamate + ADP + phosphate + H(+). It functions in the pathway cell wall biogenesis; peptidoglycan biosynthesis. In terms of biological role, cell wall formation. Catalyzes the addition of glutamate to the nucleotide precursor UDP-N-acetylmuramoyl-L-alanine (UMA). The sequence is that of UDP-N-acetylmuramoylalanine--D-glutamate ligase from Blochmanniella floridana.